A 91-amino-acid polypeptide reads, in one-letter code: YcgL domain-containing protein ESA_01460 (91 aa).

Positions methionine 1 to leucine 85 constitute a YcgL domain.

This Cronobacter sakazakii (strain ATCC BAA-894) (Enterobacter sakazakii) protein is YcgL domain-containing protein ESA_01460.